We begin with the raw amino-acid sequence, 81 residues long: Translational regulator CsrA (81 aa).

This sequence belongs to the CsrA/RsmA family. In terms of assembly, homodimer; the beta-strands of each monomer intercalate to form a hydrophobic core, while the alpha-helices form wings that extend away from the core.

It is found in the cytoplasm. A translational regulator that binds mRNA to regulate translation initiation and/or mRNA stability. Usually binds in the 5'-UTR at or near the Shine-Dalgarno sequence preventing ribosome-binding, thus repressing translation. Its main target seems to be the major flagellin gene, while its function is anatagonized by FliW. The protein is Translational regulator CsrA of Halothermothrix orenii (strain H 168 / OCM 544 / DSM 9562).